A 393-amino-acid chain; its full sequence is Flap endonuclease 1 (393 aa).

The N-domain stretch occupies residues 1–108 (MGVLGLSKLL…SELESRRQRA (108 aa)). Residue Asp-34 coordinates Mg(2+). Arg-74 serves as a coordination point for DNA. Residue Asp-90 participates in Mg(2+) binding. A compositionally biased stretch (basic and acidic residues) spans 99–120 (SELESRRQRAEDAKHEFEKAKE). Positions 99–127 (SELESRRQRAEDAKHEFEKAKEEGDDEAM) are disordered. The tract at residues 126 to 257 (AMEKMSKRMV…HKAWEGIKKY (132 aa)) is I-domain. Glu-162, Glu-164, Asp-183, and Asp-185 together coordinate Mg(2+). Glu-162 serves as a coordination point for DNA. Residues Gly-235 and Asp-237 each coordinate DNA. Mg(2+) is bound at residue Asp-237. The interval 340–348 (TQGRLDQFF) is interaction with PCNA. Residues 358–393 (NSEASTAGTKRNRGAVALPGVLQRKSSSGHKKAVKK) form a disordered region. The span at 384–393 (SSGHKKAVKK) shows a compositional bias: basic residues.

It belongs to the XPG/RAD2 endonuclease family. FEN1 subfamily. As to quaternary structure, interacts with PCNA. Three molecules of FEN1 bind to one PCNA trimer with each molecule binding to one PCNA monomer. PCNA stimulates the nuclease activity without altering cleavage specificity. It depends on Mg(2+) as a cofactor. Post-translationally, phosphorylated. Phosphorylation upon DNA damage induces relocalization to the nuclear plasma.

The protein localises to the nucleus. Its subcellular location is the nucleolus. It is found in the nucleoplasm. It localises to the mitochondrion. Structure-specific nuclease with 5'-flap endonuclease and 5'-3' exonuclease activities involved in DNA replication and repair. During DNA replication, cleaves the 5'-overhanging flap structure that is generated by displacement synthesis when DNA polymerase encounters the 5'-end of a downstream Okazaki fragment. It enters the flap from the 5'-end and then tracks to cleave the flap base, leaving a nick for ligation. Also involved in the long patch base excision repair (LP-BER) pathway, by cleaving within the apurinic/apyrimidinic (AP) site-terminated flap. Acts as a genome stabilization factor that prevents flaps from equilibrating into structures that lead to duplications and deletions. Also possesses 5'-3' exonuclease activity on nicked or gapped double-stranded DNA, and exhibits RNase H activity. Also involved in replication and repair of rDNA and in repairing mitochondrial DNA. In Trypanosoma brucei brucei (strain 927/4 GUTat10.1), this protein is Flap endonuclease 1.